A 90-amino-acid chain; its full sequence is Small ribosomal subunit protein uS15c (90 aa).

This sequence belongs to the universal ribosomal protein uS15 family. Part of the 30S ribosomal subunit.

The protein localises to the plastid. It is found in the chloroplast. This is Small ribosomal subunit protein uS15c (rps15-A) from Hordeum vulgare (Barley).